The chain runs to 884 residues: Pyruvate, phosphate dikinase (884 aa).

The N-terminal stretch occupies residues 1–351; that stretch reads MSTRRVYFFG…LWMLQARAGK (351 aa). Arg-99 lines the ATP pocket. The segment at 352-408 is linker 1; that stretch reads RTGFAMVRIAIDMCKEGMLTEEEALLRIDANKINEFLFKRFDPSVKPVVLGKGIPAS. Residues 409–507 are central; sequence PGAAVGVICF…KFKEGDFISI (99 aa). Thr-462 is subject to Phosphothreonine; by PDRP1. His-464 acts as the Tele-phosphohistidine intermediate in catalysis. The segment at 508-542 is linker 2; it reads NGTTGEIYNGAVQTIEPGITDDLQTIMDWSDKYRV. The C-terminal stretch occupies residues 543–884; the sequence is LKIRTNADTP…IAAIKARTNQ (342 aa). Residues Arg-570, Arg-626, Glu-753, Gly-774, Thr-775, Asn-776, and Asp-777 each coordinate substrate. A Mg(2+)-binding site is contributed by Glu-753. A Mg(2+)-binding site is contributed by Asp-777. The active-site Proton donor is the Cys-839.

Belongs to the PEP-utilizing enzyme family. As to quaternary structure, homodimer. It depends on Mg(2+) as a cofactor. Phosphorylation of Thr-462 in the dark inactivates the enzyme. Dephosphorylation upon light stimulation reactivates the enzyme.

It catalyses the reaction pyruvate + phosphate + ATP = phosphoenolpyruvate + AMP + diphosphate + H(+). Activated by light-induced dephosphorylation. Inhibited by dark-induced phosphorylation. Both reactions are catalyzed by PDRP1. In terms of biological role, catalyzes the reversible phosphorylation of pyruvate and phosphate. The chain is Pyruvate, phosphate dikinase from Giardia intestinalis (Giardia lamblia).